The primary structure comprises 32 residues: U13-ctenitoxin-Pn1a (32 aa).

3 cysteine pairs are disulfide-bonded: C3–C17, C10–C21, and C16–C30.

Expressed by the venom gland.

Its subcellular location is the secreted. Acts as a neurotoxin. In Phoneutria nigriventer (Brazilian armed spider), this protein is U13-ctenitoxin-Pn1a.